Reading from the N-terminus, the 88-residue chain is Small ribosomal subunit protein uS15 (88 aa).

Belongs to the universal ribosomal protein uS15 family. As to quaternary structure, part of the 30S ribosomal subunit. Forms a bridge to the 50S subunit in the 70S ribosome, contacting the 23S rRNA.

Its function is as follows. One of the primary rRNA binding proteins, it binds directly to 16S rRNA where it helps nucleate assembly of the platform of the 30S subunit by binding and bridging several RNA helices of the 16S rRNA. Forms an intersubunit bridge (bridge B4) with the 23S rRNA of the 50S subunit in the ribosome. This Opitutus terrae (strain DSM 11246 / JCM 15787 / PB90-1) protein is Small ribosomal subunit protein uS15.